The primary structure comprises 400 residues: MTQFASPVLHSLLDTDAYKLHMQQAVFHHYYDVQVAAEFRCRGDDLLGIYADAIREQVDAMQHLRLLEDEFQWLSGLPFFKPDYLNWLREFRYNPAQVCVTNDNGKLNIRLTGPWREVIMWEVPLLAVISELVHHYRSPNAGVDQALDALESKLVDFTALTANLDMSRFHLMDFGTRRRFSREVQQAIVKRLQQESWFVGTSNYDLARRLALTPMGTQAHEWFQAHQQISPDLATSQRAALAAWLNEYPDQLGIALTDCITMDAFLRDFGIEFASRYQGLRHDSGDPVAWGEKAIAHYEKLGIDPLTKTLVFSDNLDLPKAVELYRHFASRVQLSFGIGTRLTCDIPQVKPLNIVIKLVECNGKPVAKLSDSPGKTICHDKAFVRALRKAFDLPQVRKAS.

H220 is subject to Phosphohistidine; by autocatalysis.

This sequence belongs to the NAPRTase family. Post-translationally, transiently phosphorylated on a His residue during the reaction cycle. Phosphorylation strongly increases the affinity for substrates and increases the rate of nicotinate D-ribonucleotide production. Dephosphorylation regenerates the low-affinity form of the enzyme, leading to product release.

It carries out the reaction nicotinate + 5-phospho-alpha-D-ribose 1-diphosphate + ATP + H2O = nicotinate beta-D-ribonucleotide + ADP + phosphate + diphosphate. It functions in the pathway cofactor biosynthesis; NAD(+) biosynthesis; nicotinate D-ribonucleotide from nicotinate: step 1/1. Functionally, catalyzes the synthesis of beta-nicotinate D-ribonucleotide from nicotinate and 5-phospho-D-ribose 1-phosphate at the expense of ATP. This chain is Nicotinate phosphoribosyltransferase, found in Salmonella typhimurium (strain LT2 / SGSC1412 / ATCC 700720).